The primary structure comprises 85 residues: Selenoprotein W (85 aa).

A cross-link (cysteinyl-selenocysteine (Cys-Sec); redox-active) is located at residues 10–13 (CGAU). Sec13 is a non-standard amino acid (selenocysteine).

This sequence belongs to the SelWTH family. Selenoprotein W subfamily. As to expression, expressed ubiquitously with predominant expression in the pituitary, spinal cord, sciatic nerve, cerebral cortex, cerebral nuclei, thalamus, cerebellum, muscle, cartilage, trachea, gizzard and artery. Weakly expressed in pancreas, testis, ovary, kidney and veins.

The protein resides in the cytoplasm. In terms of biological role, plays a role as a glutathione (GSH)-dependent antioxidant. May be involved in a redox-related process. May play a role in the myopathies of selenium deficiency. This chain is Selenoprotein W, found in Gallus gallus (Chicken).